Reading from the N-terminus, the 231-residue chain is Ribonuclease P protein component 3 (231 aa).

The protein belongs to the eukaryotic/archaeal RNase P protein component 3 family. In terms of assembly, consists of a catalytic RNA component and at least 4-5 protein subunits.

Its subcellular location is the cytoplasm. It carries out the reaction Endonucleolytic cleavage of RNA, removing 5'-extranucleotides from tRNA precursor.. Part of ribonuclease P, a protein complex that generates mature tRNA molecules by cleaving their 5'-ends. This Methanococcus maripaludis (strain C5 / ATCC BAA-1333) protein is Ribonuclease P protein component 3.